A 58-amino-acid chain; its full sequence is Conotoxin Im5.4 (58 aa).

Positions 1–18 are cleaved as a signal peptide; that stretch reads MRCLPVVVFLLLLLSAAA. Residues 19–28 constitute a propeptide that is removed on maturation; it reads APGVGSKTER.

Belongs to the conotoxin T superfamily. Contains 2 disulfide bonds that can be either 'C1-C3, C2-C4' or 'C1-C4, C2-C3', since these disulfide connectivities have been observed for conotoxins with cysteine framework V (for examples, see AC P0DQQ7 and AC P81755). As to expression, expressed by the venom duct.

It localises to the secreted. In terms of biological role, probable neurotoxin. In Conus imperialis (Imperial cone), this protein is Conotoxin Im5.4.